A 396-amino-acid chain; its full sequence is S-adenosylmethionine synthase 1 (396 aa).

Glu-12 contributes to the Mg(2+) binding site. His-18 provides a ligand contact to ATP. A K(+)-binding site is contributed by Glu-46. Residues Glu-59 and Gln-102 each contribute to the L-methionine site. ATP is bound by residues 170 to 172, 238 to 241, Asp-249, 255 to 256, Ala-272, Lys-276, and Lys-280; these read DGK, SGRF, and RK. Asp-249 provides a ligand contact to L-methionine. Position 280 (Lys-280) interacts with L-methionine.

The protein belongs to the AdoMet synthase family. In terms of assembly, homotetramer. Mn(2+) serves as cofactor. It depends on Mg(2+) as a cofactor. The cofactor is Co(2+). Requires K(+) as cofactor.

It localises to the cytoplasm. It carries out the reaction L-methionine + ATP + H2O = S-adenosyl-L-methionine + phosphate + diphosphate. It functions in the pathway amino-acid biosynthesis; S-adenosyl-L-methionine biosynthesis; S-adenosyl-L-methionine from L-methionine: step 1/1. Catalyzes the formation of S-adenosylmethionine from methionine and ATP. The reaction comprises two steps that are both catalyzed by the same enzyme: formation of S-adenosylmethionine (AdoMet) and triphosphate, and subsequent hydrolysis of the triphosphate. The protein is S-adenosylmethionine synthase 1 (SAM1) of Oryza sativa subsp. japonica (Rice).